A 907-amino-acid polypeptide reads, in one-letter code: Protein translocase subunit SecA (907 aa).

ATP-binding positions include Gln-87, 105–109, and Asp-510; that span reads GEGKT. Zn(2+) is bound by residues Cys-892, Cys-894, Cys-903, and His-904.

Belongs to the SecA family. As to quaternary structure, monomer and homodimer. Part of the essential Sec protein translocation apparatus which comprises SecA, SecYEG and auxiliary proteins SecDF-YajC and YidC. Zn(2+) serves as cofactor.

The protein localises to the cell inner membrane. It is found in the cytoplasm. The catalysed reaction is ATP + H2O + cellular proteinSide 1 = ADP + phosphate + cellular proteinSide 2.. Part of the Sec protein translocase complex. Interacts with the SecYEG preprotein conducting channel. Has a central role in coupling the hydrolysis of ATP to the transfer of proteins into and across the cell membrane, serving both as a receptor for the preprotein-SecB complex and as an ATP-driven molecular motor driving the stepwise translocation of polypeptide chains across the membrane. In Acinetobacter baumannii (strain AB0057), this protein is Protein translocase subunit SecA.